A 347-amino-acid chain; its full sequence is Protein O-mannose kinase (347 aa).

The Cytoplasmic portion of the chain corresponds to 1 to 14; the sequence is MGGTAVGGVIGVRC. Residues 15 to 35 form a helical; Signal-anchor for type II membrane protein membrane-spanning segment; it reads GVPAVLLCLGALLCANVLLYF. Over 36-347 the chain is Lumenal; it reads YLDALYQNTN…SQSQRVRDML (312 aa). Positions 79–347 constitute a Protein kinase domain; that stretch reads VRRVKLIGQG…SQSQRVRDML (269 aa).

The protein belongs to the protein kinase superfamily. Ser/Thr protein kinase family. STKL subfamily.

The protein resides in the endoplasmic reticulum membrane. It catalyses the reaction 3-O-[beta-D-GalNAc-(1-&gt;3)-beta-D-GlcNAc-(1-&gt;4)-alpha-D-Man]-L-Thr-[protein] + ATP = 3-O-[beta-D-GalNAc-(1-&gt;3)-beta-D-GlcNAc-(1-&gt;4)-(O-6-P-alpha-D-Man)]-Thr-[protein] + ADP + H(+). Functionally, protein O-mannose kinase that specifically mediates phosphorylation at the 6-position of an O-mannose of the trisaccharide (N-acetylgalactosamine (GalNAc)-beta-1,3-N-acetylglucosamine (GlcNAc)-beta-1,4-mannose) to generate phosphorylated O-mannosyl trisaccharide (N-acetylgalactosamine-beta-1,3-N-acetylglucosamine-beta-1,4-(phosphate-6-)mannose). Phosphorylated O-mannosyl trisaccharide is a carbohydrate structure present in alpha-dystroglycan (dag1), which is required for binding laminin G-like domain-containing extracellular proteins with high affinity. Only shows kinase activity when the GalNAc-beta-3-GlcNAc-beta-terminus is linked to the 4-position of O-mannose, suggesting that this disaccharide serves as the substrate recognition motif. The chain is Protein O-mannose kinase (pomk) from Danio rerio (Zebrafish).